A 205-amino-acid polypeptide reads, in one-letter code: Urease accessory protein UreG (205 aa).

GTP is bound at residue 14–21 (GPVGSGKT).

This sequence belongs to the SIMIBI class G3E GTPase family. UreG subfamily. In terms of assembly, homodimer. UreD, UreF and UreG form a complex that acts as a GTP-hydrolysis-dependent molecular chaperone, activating the urease apoprotein by helping to assemble the nickel containing metallocenter of UreC. The UreE protein probably delivers the nickel.

Its subcellular location is the cytoplasm. Functionally, facilitates the functional incorporation of the urease nickel metallocenter. This process requires GTP hydrolysis, probably effectuated by UreG. This chain is Urease accessory protein UreG, found in Citrobacter koseri (strain ATCC BAA-895 / CDC 4225-83 / SGSC4696).